Consider the following 407-residue polypeptide: POC1 centriolar protein homolog A (407 aa).

WD repeat units follow at residues 17–56 (GHRDAVTSVDFSLNTKQLASGSMDSCLMVWHMKPQTRAYR), 59–98 (GHKDAVTCVNFSPSGHLLASGSRDKTVRIWVPNVKGESTV), 101–140 (AHTATVRSVHFCSDGQSFVTASDDKTVKVWSTHRQKFLFS), 143–182 (QHINWVRCAKFSPDGRLIVSASDDKTVKLWDKTSRECVHS), 185–224 (EHGGFVTYVDFHPSGTCIAAAGMDNTVKVWDVRTHRLLQH), 227–266 (LHSAAVNALSFHPSGNYLVTASSDSTLKILDLMEGRLLYT), and 269–308 (GHQGPATTVAFSRTGEYFASGGSDEQVMVWKSNFDIVDYG). The interval 317–357 (PATRASSSGTLPEVDPLVPPGRGRSQESMQSHSQEPVSVPQ) is disordered. Residues 342 to 357 (QESMQSHSQEPVSVPQ) show a composition bias toward polar residues. A coiled-coil region spans residues 369–397 (QLDVLTQTVSILEQRLTLTEDKLKQCLEN).

It belongs to the WD repeat POC1 family. As to quaternary structure, interacts with POC1B.

Its subcellular location is the cytoplasm. It is found in the cytoskeleton. The protein resides in the microtubule organizing center. The protein localises to the centrosome. It localises to the centriole. Its subcellular location is the cilium basal body. It is found in the spindle pole. Plays an important role in centriole assembly and/or stability and ciliogenesis. Involved in early steps of centriole duplication, as well as in the later steps of centriole length control. Acts in concert with POC1B to ensure centriole integrity and proper mitotic spindle formation. This is POC1 centriolar protein homolog A (POC1A) from Bos taurus (Bovine).